The following is a 114-amino-acid chain: Fumarate reductase subunit D (114 aa).

A run of 3 helical transmembrane segments spans residues 27–47, 50–70, and 94–114; these read ICFPVLLLILGVLLPLGLVPV, IVAFAHTWFGKLVILAVTIFP, and WVFYGLSALYSVIVFFAVIAL.

This sequence belongs to the FrdD family. As to quaternary structure, part of an enzyme complex containing four subunits: a flavoprotein (FrdA), an iron-sulfur protein (FrdB), and two hydrophobic anchor proteins (FrdC and FrdD).

The protein resides in the cell inner membrane. Its function is as follows. Anchors the catalytic components of the fumarate reductase complex to the cell membrane, binds quinones. In Actinobacillus pleuropneumoniae serotype 3 (strain JL03), this protein is Fumarate reductase subunit D.